A 359-amino-acid chain; its full sequence is Ferredoxin--NADP reductase (359 aa).

Residues D48, Q56, Y61, A101, F139, D304, and S345 each coordinate FAD.

It belongs to the ferredoxin--NADP reductase type 2 family. Homodimer. FAD serves as cofactor.

The catalysed reaction is 2 reduced [2Fe-2S]-[ferredoxin] + NADP(+) + H(+) = 2 oxidized [2Fe-2S]-[ferredoxin] + NADPH. The polypeptide is Ferredoxin--NADP reductase (Ralstonia pickettii (strain 12J)).